Consider the following 402-residue polypeptide: Sex hormone-binding globulin (402 aa).

An N-terminal signal peptide occupies residues 1 to 29 (MESRGPLATSRLLLLLLLLLLRHTRQGWA). The O-linked (GalNAc...) threonine glycan is linked to threonine 36. 2 Laminin G-like domains span residues 45–217 (VHLS…LRSC) and 224–390 (GIFL…THSC). Intrachain disulfides connect cysteine 193/cysteine 217 and cysteine 362/cysteine 390. Residues asparagine 380 and asparagine 396 are each glycosylated (N-linked (GlcNAc...) asparagine).

In terms of assembly, homodimer. In terms of processing, variant Asn-356 contains one N-linked (GlcNAc...) at position 356. As to expression, isoform 1 and isoform 2 are present in liver and testis.

It is found in the secreted. In terms of biological role, functions as an androgen transport protein, but may also be involved in receptor mediated processes. Each dimer binds one molecule of steroid. Specific for 5-alpha-dihydrotestosterone, testosterone, and 17-beta-estradiol. Regulates the plasma metabolic clearance rate of steroid hormones by controlling their plasma concentration. This Homo sapiens (Human) protein is Sex hormone-binding globulin.